Reading from the N-terminus, the 342-residue chain is Ribosomal RNA small subunit methyltransferase C (342 aa).

The protein belongs to the methyltransferase superfamily. RsmC family. In terms of assembly, monomer.

The protein resides in the cytoplasm. The catalysed reaction is guanosine(1207) in 16S rRNA + S-adenosyl-L-methionine = N(2)-methylguanosine(1207) in 16S rRNA + S-adenosyl-L-homocysteine + H(+). Functionally, specifically methylates the guanine in position 1207 of 16S rRNA in the 30S particle. In Salmonella paratyphi A (strain ATCC 9150 / SARB42), this protein is Ribosomal RNA small subunit methyltransferase C.